We begin with the raw amino-acid sequence, 130 residues long: Small ribosomal subunit protein uS11 (130 aa).

The protein belongs to the universal ribosomal protein uS11 family. In terms of assembly, part of the 30S ribosomal subunit. Interacts with proteins S7 and S18. Binds to IF-3.

In terms of biological role, located on the platform of the 30S subunit, it bridges several disparate RNA helices of the 16S rRNA. Forms part of the Shine-Dalgarno cleft in the 70S ribosome. The chain is Small ribosomal subunit protein uS11 from Campylobacter jejuni subsp. jejuni serotype O:6 (strain 81116 / NCTC 11828).